The chain runs to 220 residues: Pyrrolidone-carboxylate peptidase 1 (220 aa).

Active-site residues include Glu80, Cys143, and His172.

This sequence belongs to the peptidase C15 family. As to quaternary structure, homotetramer.

The protein localises to the cytoplasm. It carries out the reaction Release of an N-terminal pyroglutamyl group from a polypeptide, the second amino acid generally not being Pro.. Functionally, removes 5-oxoproline from various penultimate amino acid residues except L-proline. The chain is Pyrrolidone-carboxylate peptidase 1 from Photorhabdus laumondii subsp. laumondii (strain DSM 15139 / CIP 105565 / TT01) (Photorhabdus luminescens subsp. laumondii).